The sequence spans 146 residues: Myoglobin (146 aa).

A Globin domain is found at 2-141 (GDFDMVLKFW…IIADIDATYK (140 aa)). A nitrite-binding site is contributed by H60. Position 60 (H60) interacts with O2. Position 89 (H89) interacts with heme b.

The protein belongs to the globin family. In terms of assembly, monomeric.

The protein localises to the cytoplasm. It is found in the sarcoplasm. It carries out the reaction Fe(III)-heme b-[protein] + nitric oxide + H2O = Fe(II)-heme b-[protein] + nitrite + 2 H(+). The catalysed reaction is H2O2 + AH2 = A + 2 H2O. Functionally, monomeric heme protein which primary function is to store oxygen and facilitate its diffusion within muscle tissues. Reversibly binds oxygen through a pentacoordinated heme iron and enables its timely and efficient release as needed during periods of heightened demand. Depending on the oxidative conditions of tissues and cells, and in addition to its ability to bind oxygen, it also has a nitrite reductase activity whereby it regulates the production of bioactive nitric oxide. Under stress conditions, like hypoxia and anoxia, it also protects cells against reactive oxygen species thanks to its pseudoperoxidase activity. This Tetraodon nigroviridis (Spotted green pufferfish) protein is Myoglobin (mb).